The following is a 268-amino-acid chain: Nickel import ATP-binding protein NikE (268 aa).

Residues 4–252 (LNISGLSHHY…SSDAGRVLQN (249 aa)) enclose the ABC transporter domain. An ATP-binding site is contributed by 45 to 52 (GRSGCGKS).

It belongs to the ABC transporter superfamily. Nickel importer (TC 3.A.1.5.3) family. As to quaternary structure, the complex is composed of two ATP-binding proteins (NikD and NikE), two transmembrane proteins (NikB and NikC) and a solute-binding protein (NikA).

The protein resides in the cell inner membrane. The catalysed reaction is Ni(2+)(out) + ATP + H2O = Ni(2+)(in) + ADP + phosphate + H(+). Functionally, part of the ABC transporter complex NikABCDE involved in nickel import. Responsible for energy coupling to the transport system. The protein is Nickel import ATP-binding protein NikE of Escherichia coli (strain K12).